Here is a 636-residue protein sequence, read N- to C-terminus: MSHRIRHLSCLACRRKKVKCNRQYPCTRCLKYGEACTYDERDNRKKRHSLSYLHSLESQLARLESFIMTLKNSDPEGRDEMLKSVVFSDHLTEPNDQEVKSEGPIEYPVFLNVQDSKTVSFYGPTSAYDLSLPDITKDNKTTWNFQASYSPMVSECLKLFFRYQYSQFLFVYRESFLSDYYYNFHDGFYCTEHLIYAICAIGASMSDDENISRHSKSYYDASWQKLLEFGLDRSHLTSVQCLLCLGYYDIGMGNTSLGWLLSGLAFRMGQDLGFQLNPENWYIDNSPAISSADSDIRRRVFWGSYVADKFIGFIMGRPTMLKRSDASIPGSNQLPEFAGLEEFKLNVTDYMSLTDFSVCDAVALFVDLSDIADSILLNMFSPTSKNRATNINCVLSNLGKYNLELMNWHYKLPDTISWRTIDLKKDRIPNLCAVSLYYHLIRICLNRPFLSRKEVTANDLTPKTICTDSINEIVTVIRAHRTANGLRYSTLYIVYAAIVSCSVILLLRDMCTDSELLTLNNDMMFFIEVLKECSQTWKLAQRSIVLIENTLKGKTNSQSTSEFVSPISDTENGSSSQQVSEAKDIVEPSDVLDELQKFDLLPENDDNFQTFQAFYGGPPIILSPNLYEKKLNEKTL.

The zn(2)-C6 fungal-type DNA-binding region spans 10–36; it reads CLACRRKKVKCNRQYPCTRCLKYGEAC. Residues 556–580 show a composition bias toward polar residues; the sequence is NSQSTSEFVSPISDTENGSSSQQVS. A disordered region spans residues 556 to 581; sequence NSQSTSEFVSPISDTENGSSSQQVSE.

Its subcellular location is the cytoplasm. It is found in the nucleus. This is an uncharacterized protein from Schizosaccharomyces pombe (strain 972 / ATCC 24843) (Fission yeast).